A 492-amino-acid polypeptide reads, in one-letter code: Cysteine--tRNA ligase (492 aa).

Residue Cys35 participates in Zn(2+) binding. A 'HIGH' region motif is present at residues Pro37–Asn47. Zn(2+) is bound by residues Cys230, His255, and Glu259. The short motif at Lys287–Ser291 is the 'KMSKS' region element. Residue Lys290 coordinates ATP.

This sequence belongs to the class-I aminoacyl-tRNA synthetase family. As to quaternary structure, monomer. Zn(2+) serves as cofactor.

The protein resides in the cytoplasm. The enzyme catalyses tRNA(Cys) + L-cysteine + ATP = L-cysteinyl-tRNA(Cys) + AMP + diphosphate. This chain is Cysteine--tRNA ligase, found in Flavobacterium johnsoniae (strain ATCC 17061 / DSM 2064 / JCM 8514 / BCRC 14874 / CCUG 350202 / NBRC 14942 / NCIMB 11054 / UW101) (Cytophaga johnsonae).